The chain runs to 70 residues: Translational regulator CsrA (70 aa).

The protein belongs to the CsrA/RsmA family. As to quaternary structure, homodimer; the beta-strands of each monomer intercalate to form a hydrophobic core, while the alpha-helices form wings that extend away from the core.

Its subcellular location is the cytoplasm. In terms of biological role, a translational regulator that binds mRNA to regulate translation initiation and/or mRNA stability. Usually binds in the 5'-UTR at or near the Shine-Dalgarno sequence preventing ribosome-binding, thus repressing translation. Its main target seems to be the major flagellin gene, while its function is anatagonized by FliW. The protein is Translational regulator CsrA of Clostridioides difficile (strain 630) (Peptoclostridium difficile).